The primary structure comprises 349 residues: Ion-translocating oxidoreductase complex subunit D (349 aa).

A run of 3 helical transmembrane segments spans residues 20-42 (VMQR…FGWG), 77-99 (SAML…WMIV), and 124-144 (AMAA…TWIA). An FMN phosphoryl threonine modification is found at threonine 185. The next 5 membrane-spanning stretches (helical) occupy residues 212-232 (STGV…LVLL), 239-259 (WHIS…GFLL), 265-285 (ASPL…FIAT), 291-311 (ATSS…VYII), and 315-335 (GGYP…APFI).

Belongs to the NqrB/RnfD family. The complex is composed of six subunits: RnfA, RnfB, RnfC, RnfD, RnfE and RnfG. FMN is required as a cofactor.

Its subcellular location is the cell inner membrane. Functionally, part of a membrane-bound complex that couples electron transfer with translocation of ions across the membrane. In Shewanella baltica (strain OS223), this protein is Ion-translocating oxidoreductase complex subunit D.